The sequence spans 251 residues: 5'-nucleotidase SurE (251 aa).

4 residues coordinate a divalent metal cation: D8, D9, S42, and N94.

Belongs to the SurE nucleotidase family. A divalent metal cation serves as cofactor.

It is found in the cytoplasm. The catalysed reaction is a ribonucleoside 5'-phosphate + H2O = a ribonucleoside + phosphate. Its function is as follows. Nucleotidase that shows phosphatase activity on nucleoside 5'-monophosphates. The sequence is that of 5'-nucleotidase SurE from Hydrogenovibrio crunogenus (strain DSM 25203 / XCL-2) (Thiomicrospira crunogena).